The primary structure comprises 542 residues: Chaperonin GroEL (542 aa).

ATP contacts are provided by residues 29-32 (TLGP), 86-90 (DGTTT), Gly413, and Asp492.

The protein belongs to the chaperonin (HSP60) family. As to quaternary structure, forms a cylinder of 14 subunits composed of two heptameric rings stacked back-to-back. Interacts with the co-chaperonin GroES.

Its subcellular location is the cytoplasm. The enzyme catalyses ATP + H2O + a folded polypeptide = ADP + phosphate + an unfolded polypeptide.. Functionally, together with its co-chaperonin GroES, plays an essential role in assisting protein folding. The GroEL-GroES system forms a nano-cage that allows encapsulation of the non-native substrate proteins and provides a physical environment optimized to promote and accelerate protein folding. The polypeptide is Chaperonin GroEL (Nocardia asteroides).